A 447-amino-acid chain; its full sequence is 3-O-methyltransferase 2 (447 aa).

Residues 264–265, Asp287, 318–319, and Arg334 contribute to the S-adenosyl-L-methionine site; these read GG and DF. His338 serves as the catalytic Proton acceptor.

This sequence belongs to the class I-like SAM-binding methyltransferase superfamily. Cation-independent O-methyltransferase family. COMT subfamily.

Its function is as follows. S-adenosyl-L-methionine-dependent methyltransferase that preferentially catalyzes the methylation of 3-OH phenolic compounds like isovanillic acid and 3-OH-4-Met cinnamic acid. May play a role in promoting lignin degradation by methylating and inactivating free-hydroxyl phenolic compounds, products of lignin cleavage which are known inhibitors of lignin peroxidases. The protein is 3-O-methyltransferase 2 of Phanerochaete chrysosporium (strain RP-78 / ATCC MYA-4764 / FGSC 9002) (White-rot fungus).